The sequence spans 125 residues: Succinate dehydrogenase cytochrome b556 subunit (125 aa).

Over 1 to 22 the chain is Cytoplasmic; that stretch reads MNAKRPVNLDLTKFHFPPMAIL. The helical transmembrane segment at 23 to 48 threads the bilayer; that stretch reads SIGHRISGFVLFLCMPLMFYLLHRAT. Topologically, residues 49–65 are periplasmic; that stretch reads ASAESFYHLHQLLLHNG. The helical transmembrane segment at 66–86 threads the bilayer; sequence WIKLAVWIMLSATLFHLFAGI. H81 is a binding site for heme. Residues 87-104 are Cytoplasmic-facing; that stretch reads RHLAMDLGFWESVPEGRI. Residues 105–125 form a helical membrane-spanning segment; the sequence is SAYTVFVVSFIAIVLAGVWIW.

The protein belongs to the cytochrome b560 family. Part of an enzyme complex containing four subunits: a flavoprotein, an iron-sulfur protein, plus two membrane-anchoring proteins, SdhC and SdhD. The complex can form homotrimers. Heme is required as a cofactor.

The protein resides in the cell inner membrane. The protein operates within carbohydrate metabolism; tricarboxylic acid cycle. Membrane-anchoring subunit of succinate dehydrogenase (SDH). This is Succinate dehydrogenase cytochrome b556 subunit (sdhC) from Coxiella burnetii (strain RSA 493 / Nine Mile phase I).